A 197-amino-acid polypeptide reads, in one-letter code: Ras-related protein RabG2 (197 aa).

GTP-binding positions include 13–20 (GDSAVGKT), 61–65 (DTAGQ), and 119–122 (NKCD). Residues 175–197 (SKPSVVNPGSGGTSNTGGKKKFC) form a disordered region. Cysteine 197 carries S-geranylgeranyl cysteine lipidation.

This sequence belongs to the small GTPase superfamily. Rab family.

It is found in the cell membrane. The polypeptide is Ras-related protein RabG2 (rabG2) (Dictyostelium discoideum (Social amoeba)).